Reading from the N-terminus, the 161-residue chain is Ecotin (161 aa).

Residues 1-23 form the signal peptide; it reads MGNFTVRATAGLMLASLSTLAHA. The cysteines at positions 69 and 106 are disulfide-linked.

It belongs to the protease inhibitor I11 (ecotin) family. In terms of assembly, homodimer.

The protein localises to the periplasm. Functionally, general inhibitor of family S1 serine proteases. This chain is Ecotin, found in Pseudomonas fluorescens (strain Pf0-1).